Consider the following 367-residue polypeptide: Isocitrate dehydrogenase [NAD] regulatory subunit 1, mitochondrial (367 aa).

Residues 1-25 constitute a mitochondrion transit peptide; the sequence is MSRRSLTLLKNLARNANGSGIQTRS.

The protein belongs to the isocitrate and isopropylmalate dehydrogenases family. Heterooligomer of catalytic and regulatory subunits. In terms of tissue distribution, ubiquitous. Predominantly expressed in roots, stems and leaves.

It localises to the mitochondrion. Functionally, performs an essential role in the oxidative function of the citric acid cycle. In Arabidopsis thaliana (Mouse-ear cress), this protein is Isocitrate dehydrogenase [NAD] regulatory subunit 1, mitochondrial (IDH1).